A 76-amino-acid chain; its full sequence is Conotoxin MaIr332 (76 aa).

The first 21 residues, 1-21 (MKLTCVIVAVLFLTAWTFVTA), serve as a signal peptide directing secretion. A propeptide spanning residues 22 to 48 (DDSGNGLENLFSKAHHEMKNPKDSKLN) is cleaved from the precursor. 3 disulfide bridges follow: Cys-51-Cys-66, Cys-58-Cys-70, and Cys-65-Cys-75.

Belongs to the conotoxin O1 superfamily. In terms of tissue distribution, expressed by the venom duct.

Its subcellular location is the secreted. The sequence is that of Conotoxin MaIr332 from Conus marmoreus (Marble cone).